A 554-amino-acid polypeptide reads, in one-letter code: Chaperonin GroEL (554 aa).

ATP contacts are provided by residues 29-32 (TLGP), Lys-50, 86-90 (DGTTT), Gly-418, and Asp-499. The segment at 528–554 (HEEDNNTNRSGGGVGGGHHGGMGGMDF) is disordered. A compositionally biased stretch (gly residues) spans 537–554 (SGGGVGGGHHGGMGGMDF).

It belongs to the chaperonin (HSP60) family. Forms a cylinder of 14 subunits composed of two heptameric rings stacked back-to-back. Interacts with the co-chaperonin GroES.

The protein resides in the cytoplasm. It carries out the reaction ATP + H2O + a folded polypeptide = ADP + phosphate + an unfolded polypeptide.. In terms of biological role, together with its co-chaperonin GroES, plays an essential role in assisting protein folding. The GroEL-GroES system forms a nano-cage that allows encapsulation of the non-native substrate proteins and provides a physical environment optimized to promote and accelerate protein folding. The protein is Chaperonin GroEL of Orientia tsutsugamushi (strain Boryong) (Rickettsia tsutsugamushi).